The sequence spans 810 residues: LPS-assembly protein LptD (810 aa).

The N-terminal stretch at 1–29 is a signal peptide; it reads MTKRTLGYSYPIALTISLVPALTPAIVQA.

Belongs to the LptD family. In terms of assembly, component of the lipopolysaccharide transport and assembly complex. Interacts with LptE and LptA.

The protein resides in the cell outer membrane. Together with LptE, is involved in the assembly of lipopolysaccharide (LPS) at the surface of the outer membrane. This is LPS-assembly protein LptD from Aeromonas hydrophila subsp. hydrophila (strain ATCC 7966 / DSM 30187 / BCRC 13018 / CCUG 14551 / JCM 1027 / KCTC 2358 / NCIMB 9240 / NCTC 8049).